Reading from the N-terminus, the 340-residue chain is MEENKRKSLENALKTIEKEFGKGAVMRLGEMPKLQVDVIPTGSLGLDLALGIGGIPRGRVTEIFGPESGGKTTLALTIIAQAQKGGGVAAFVDAEHALDPLYAKKLGVDVQELLVSQPDTGEQALEIVELLARSGAVDVIVVDSVAALVPKAEIEGEMGDQHVGLQARLMSQALRKLTAVLSKSNTAAIFINQVREKVGVMYGNPETTPGGRALKFYSSVRLDVRKSGQPIKVGNEAVGIKVKVKVVKNKLAPPFREAELEIYFGRGLDPVMDLVNVAVAAGVIEKAGSWFSYGEHRLGQGKEKAAEYLRERPELLEEIRAKVLERADKVVLAAGEEEGE.

Gly-65–Thr-72 contacts ATP.

This sequence belongs to the RecA family.

It localises to the cytoplasm. Can catalyze the hydrolysis of ATP in the presence of single-stranded DNA, the ATP-dependent uptake of single-stranded DNA by duplex DNA, and the ATP-dependent hybridization of homologous single-stranded DNAs. It interacts with LexA causing its activation and leading to its autocatalytic cleavage. In Thermus aquaticus, this protein is Protein RecA.